A 64-amino-acid polypeptide reads, in one-letter code: Large ribosomal subunit protein bL32 (64 aa).

Positions 1–35 (MAVQKSRVTPSRRGMRRAHDALSAKQLSTDPTTGE) are disordered.

This sequence belongs to the bacterial ribosomal protein bL32 family.

The polypeptide is Large ribosomal subunit protein bL32 (Stenotrophomonas maltophilia (strain R551-3)).